The primary structure comprises 216 residues: Peroxiredoxin (216 aa).

One can recognise a Thioredoxin domain in the interval Val2–Ile158. Residue Cys46 is the Cysteine sulfenic acid (-SOH) intermediate of the active site. Arg121 contacts substrate. Cysteines 205 and 211 form a disulfide.

Belongs to the peroxiredoxin family. Prx6 subfamily. Homodecamer. Pentamer of dimers that assemble into a ring structure.

Its subcellular location is the cytoplasm. It catalyses the reaction a hydroperoxide + [thioredoxin]-dithiol = an alcohol + [thioredoxin]-disulfide + H2O. Its function is as follows. Thiol-specific peroxidase that catalyzes the reduction of hydrogen peroxide and organic hydroperoxides to water and alcohols, respectively. Plays a role in cell protection against oxidative stress by detoxifying peroxides. The polypeptide is Peroxiredoxin (Pyrococcus abyssi (strain GE5 / Orsay)).